The following is a 164-amino-acid chain: GTP-dependent dephospho-CoA kinase (164 aa).

GTP is bound by residues Asp40, Val41, Val42, Asp59, Lys61, and Glu113.

Belongs to the GTP-dependent DPCK family.

It carries out the reaction 3'-dephospho-CoA + GTP = GDP + CoA + H(+). It participates in cofactor biosynthesis; coenzyme A biosynthesis. In terms of biological role, catalyzes the GTP-dependent phosphorylation of the 3'-hydroxyl group of dephosphocoenzyme A to form coenzyme A (CoA). The sequence is that of GTP-dependent dephospho-CoA kinase from Sulfolobus acidocaldarius (strain ATCC 33909 / DSM 639 / JCM 8929 / NBRC 15157 / NCIMB 11770).